Here is a 99-residue protein sequence, read N- to C-terminus: MAQIKIEIAYAYPERYYLKKLTVEEGTMIQTAILQSGILQQFTEIDLRENKVGIFSRPAKLTDQLKDGDRIEIYRPLLADPKEIRRKRAEQQAAQAKKK.

This sequence belongs to the UPF0125 (RnfH) family.

This Pasteurella multocida (strain Pm70) protein is UPF0125 protein PM0166.